We begin with the raw amino-acid sequence, 486 residues long: Probable transporter MCH1 (486 aa).

The next 6 membrane-spanning stretches (helical) occupy residues 31-51, 69-89, 91-111, 132-152, 164-184, and 204-224; these read ISFFISLFSCLTSGSIMLFSL, FIASLSAIGMYLCLPVLGYLA, CYGPSLLSLISIWFFVPSYFV, FGICFFFIGLATSSLYFSSLL, LAISLPVTCYGLSTLLGSQLM, and FFGVLYLVMGILNFVSSSVVS. The segment at 236–260 is disordered; it reads EMEEADEESPLMTSRSRHSHHSCED. A helical membrane pass occupies residues 280 to 300; it reads FINFLKDKSAWLLLASLILNI. N322 carries N-linked (GlcNAc...) asparagine glycosylation. The next 2 membrane-spanning stretches (helical) occupy residues 327-348 and 357-377; these read VSIMAASSTVTRLAMGGLSDYL and ICRVNLLIINLAIGIVGQFMV. The N-linked (GlcNAc...) asparagine glycan is linked to N390. 2 helical membrane passes run 395-415 and 417-437; these read GGLFTIYPTIVASIWGIDMMG and TWGSFMIAPAIGSIGFSIFYG. N457 is a glycosylation site (N-linked (GlcNAc...) asparagine). A helical membrane pass occupies residues 458 to 478; sequence LTAVGLSVSLILIIIVWKGIW.

It belongs to the major facilitator superfamily.

Its subcellular location is the vacuole membrane. In terms of biological role, probable transporter. The chain is Probable transporter MCH1 (MCH1) from Debaryomyces hansenii (strain ATCC 36239 / CBS 767 / BCRC 21394 / JCM 1990 / NBRC 0083 / IGC 2968) (Yeast).